The chain runs to 485 residues: Arginine biosynthesis bifunctional protein ArgJ, mitochondrial (485 aa).

Substrate contacts are provided by T185, K214, T225, and E315. T225 serves as the catalytic Nucleophile.

This sequence belongs to the ArgJ family. In terms of assembly, heterodimer of an alpha and a beta chain. In terms of processing, the alpha and beta chains are autoproteolytically processed from a single precursor protein within the mitochondrion.

It is found in the mitochondrion matrix. It catalyses the reaction N(2)-acetyl-L-ornithine + L-glutamate = N-acetyl-L-glutamate + L-ornithine. It carries out the reaction L-glutamate + acetyl-CoA = N-acetyl-L-glutamate + CoA + H(+). Its pathway is amino-acid biosynthesis; L-arginine biosynthesis; L-ornithine and N-acetyl-L-glutamate from L-glutamate and N(2)-acetyl-L-ornithine (cyclic): step 1/1. It participates in amino-acid biosynthesis; L-arginine biosynthesis; N(2)-acetyl-L-ornithine from L-glutamate: step 1/4. In terms of biological role, catalyzes two activities which are involved in the cyclic version of arginine biosynthesis: the synthesis of acetylglutamate from glutamate and acetyl-CoA, and of ornithine by transacetylation between acetylornithine and glutamate. The chain is Arginine biosynthesis bifunctional protein ArgJ, mitochondrial from Penicillium rubens (strain ATCC 28089 / DSM 1075 / NRRL 1951 / Wisconsin 54-1255) (Penicillium chrysogenum).